Consider the following 212-residue polypeptide: Ras-related protein RABC1 (212 aa).

Residue Gly-2 is modified to N-acetylglycine. Residue 20 to 27 coordinates GTP; it reads GDSGVGKS. The Effector region signature appears at 41-49; sequence LSPTIGVDF. GTP is bound by residues 67 to 71, 127 to 130, and 157 to 158; these read DTAGQ, NKVD, and SA. The segment at 182-212 is disordered; that stretch reads TAEGSSGGKKNIFKQNPAQTTSTSSSYCCSS. A compositionally biased stretch (low complexity) spans 201 to 212; it reads TTSTSSSYCCSS. Residues Cys-209 and Cys-210 are each lipidated (S-geranylgeranyl cysteine).

It belongs to the small GTPase superfamily. Rab family.

It localises to the cell membrane. Its function is as follows. Intracellular vesicle trafficking and protein transport. The sequence is that of Ras-related protein RABC1 (RABC1) from Arabidopsis thaliana (Mouse-ear cress).